A 205-amino-acid chain; its full sequence is MNPNLNIEQDNASEIIAGVDEAGRGPLAGPVVAAAVVVNQSIMIDDIKDSKVLSKSKRESCYDKITNNYYYSIGIASVQEIDKYNILEATKLACIRAVKNLAIIPTKVLVDGNMNFTDNRFISIVRGDQICYSIASASIVAKVTRDRMMQILHQEYPVYGWNQNCGYGTKLHIEAIKTYGQTIHHRVSFKFKGNINHSAILGNMV.

Positions glutamate 14–leucine 201 constitute an RNase H type-2 domain. Positions 20, 21, and 111 each coordinate a divalent metal cation.

It belongs to the RNase HII family. It depends on Mn(2+) as a cofactor. Mg(2+) serves as cofactor.

It localises to the cytoplasm. It carries out the reaction Endonucleolytic cleavage to 5'-phosphomonoester.. Endonuclease that specifically degrades the RNA of RNA-DNA hybrids. The sequence is that of Ribonuclease HII from Orientia tsutsugamushi (strain Ikeda) (Rickettsia tsutsugamushi).